Here is a 132-residue protein sequence, read N- to C-terminus: Small ribosomal subunit protein uS11c (132 aa).

It belongs to the universal ribosomal protein uS11 family. As to quaternary structure, part of the 30S ribosomal subunit.

The protein localises to the plastid. It is found in the chloroplast. The sequence is that of Small ribosomal subunit protein uS11c from Cryptomeria japonica (Japanese cedar).